Consider the following 273-residue polypeptide: Histidine racemase (273 aa).

Cysteine 72 acts as the Proton acceptor in catalysis. Residue cysteine 211 is the Proton donor of the active site.

It belongs to the histidine racemase family. As to quaternary structure, homodimer.

Its subcellular location is the cytoplasm. It catalyses the reaction L-histidine = D-histidine. Its function is as follows. Isomerase that catalyzes the conversion of L-histidine to D-histidine. Functions the biosynthesis of the metallophore staphylopine, which is involved in the acquisition of nickel, cobalt, zinc, copper, and iron, and thus enables bacterial growth inside the host, where metal access is limited. Therefore, this enzyme probably contributes to staphylococcal virulence. The reaction is reversible in vitro, the enzyme can produce D-histidine from the L-stereoisomer and vice versa. Appears to be specific for histidine as it cannot use other amino acids as substrate, including L-alanine and L-methionine. In Staphylococcus aureus (strain Mu50 / ATCC 700699), this protein is Histidine racemase.